A 212-amino-acid chain; its full sequence is Regulatory protein RecX (212 aa).

Belongs to the RecX family.

It localises to the cytoplasm. Modulates RecA activity. The chain is Regulatory protein RecX from Clostridium perfringens (strain SM101 / Type A).